Here is a 369-residue protein sequence, read N- to C-terminus: GTPase Obg (369 aa).

The region spanning 1 to 159 is the Obg domain; it reads MKFIDEAKIE…RELRLELKVL (159 aa). Residues 128–148 are disordered; the sequence is IHFKSSTNRAPRQKSEGKEGE. In terms of domain architecture, OBG-type G spans 160 to 333; that stretch reads ADIGLLGMPN…LVTEIYDYIA (174 aa). GTP contacts are provided by residues 166-173, 191-195, 213-216, 283-286, and 314-316; these read GMPNAGKS, FTTLH, DIPG, NKLD, and SAL. Mg(2+) is bound by residues S173 and T193.

This sequence belongs to the TRAFAC class OBG-HflX-like GTPase superfamily. OBG GTPase family. Monomer. The cofactor is Mg(2+).

The protein resides in the cytoplasm. Functionally, an essential GTPase which binds GTP, GDP and possibly (p)ppGpp with moderate affinity, with high nucleotide exchange rates and a fairly low GTP hydrolysis rate. Plays a role in control of the cell cycle, stress response, ribosome biogenesis and in those bacteria that undergo differentiation, in morphogenesis control. In Herminiimonas arsenicoxydans, this protein is GTPase Obg.